The primary structure comprises 1055 residues: Cellulose synthase A catalytic subunit 9 [UDP-forming] (1055 aa).

Residues methionine 1–methionine 268 lie on the Cytoplasmic side of the membrane. Residues cysteine 37, cysteine 40, cysteine 56, cysteine 59, cysteine 64, cysteine 67, cysteine 79, and cysteine 82 each coordinate Zn(2+). An RING-type; degenerate zinc finger spans residues cysteine 37–lysine 83. The chain crosses the membrane as a helical span at residues valine 269 to valine 289. Over proline 290–aspartate 291 the chain is Extracellular. A helical membrane pass occupies residues alanine 292–leucine 312. Over aspartate 313–threonine 831 the chain is Cytoplasmic. UDP-alpha-D-glucose-binding residues include serine 351, lysine 357, glutamate 358, and aspartate 387. Aspartate 387 is an active-site residue. Residues asparagine 439–valine 468 adopt a coiled-coil conformation. Lysine 528 is a binding site for UDP-alpha-D-glucose. Mn(2+) is bound by residues lysine 529 and aspartate 553. The active site involves aspartate 753. The helical transmembrane segment at isoleucine 832 to leucine 852 threads the bilayer. The Extracellular segment spans residues threonine 853–proline 860. Residues isoleucine 861 to isoleucine 881 traverse the membrane as a helical segment. The Cytoplasmic portion of the chain corresponds to leucine 882–glutamine 899. The helical transmembrane segment at phenylalanine 900 to valine 920 threads the bilayer. Residues leucine 921 to threonine 951 lie on the Extracellular side of the membrane. Asparagine 927 carries N-linked (GlcNAc...) asparagine glycosylation. Residues threonine 952–valine 972 traverse the membrane as a helical segment. Topologically, residues serine 973–tryptophan 983 are cytoplasmic. A helical transmembrane segment spans residues glycine 984–leucine 1004. The Extracellular segment spans residues lysine 1005–arginine 1013. The chain crosses the membrane as a helical span at residues threonine 1014 to valine 1034. Topologically, residues arginine 1035–cysteine 1055 are cytoplasmic.

It belongs to the glycosyltransferase 2 family. Plant cellulose synthase subfamily. Mn(2+) is required as a cofactor. Zn(2+) serves as cofactor.

It is found in the cell membrane. It catalyses the reaction [(1-&gt;4)-beta-D-glucosyl](n) + UDP-alpha-D-glucose = [(1-&gt;4)-beta-D-glucosyl](n+1) + UDP + H(+). Its pathway is glycan metabolism; plant cellulose biosynthesis. In terms of biological role, catalytic subunit of cellulose synthase terminal complexes ('rosettes'), required for beta-1,4-glucan microfibril crystallization, a major mechanism of the cell wall formation. Involved in the secondary cell wall formation. In Oryza sativa subsp. indica (Rice), this protein is Cellulose synthase A catalytic subunit 9 [UDP-forming] (CESA9).